The following is a 309-amino-acid chain: Pantothenate kinase (309 aa).

92-99 is an ATP binding site; the sequence is GSVAVGKS.

It belongs to the prokaryotic pantothenate kinase family.

It is found in the cytoplasm. The catalysed reaction is (R)-pantothenate + ATP = (R)-4'-phosphopantothenate + ADP + H(+). It functions in the pathway cofactor biosynthesis; coenzyme A biosynthesis; CoA from (R)-pantothenate: step 1/5. The sequence is that of Pantothenate kinase from Latilactobacillus sakei subsp. sakei (strain 23K) (Lactobacillus sakei subsp. sakei).